A 420-amino-acid chain; its full sequence is Glutamyl-tRNA reductase (420 aa).

Substrate contacts are provided by residues 49 to 52, S109, 114 to 116, and Q120; these read TCNR and EPQ. The active-site Nucleophile is the C50. 189–194 contributes to the NADP(+) binding site; it reads GAGETI.

This sequence belongs to the glutamyl-tRNA reductase family. As to quaternary structure, homodimer.

The enzyme catalyses (S)-4-amino-5-oxopentanoate + tRNA(Glu) + NADP(+) = L-glutamyl-tRNA(Glu) + NADPH + H(+). It participates in porphyrin-containing compound metabolism; protoporphyrin-IX biosynthesis; 5-aminolevulinate from L-glutamyl-tRNA(Glu): step 1/2. In terms of biological role, catalyzes the NADPH-dependent reduction of glutamyl-tRNA(Glu) to glutamate 1-semialdehyde (GSA). The chain is Glutamyl-tRNA reductase from Yersinia enterocolitica serotype O:8 / biotype 1B (strain NCTC 13174 / 8081).